The chain runs to 249 residues: Zinc import ATP-binding protein ZnuC (249 aa).

Residues Met1–Gly219 form the ABC transporter domain. Gly36 to Ser43 serves as a coordination point for ATP.

It belongs to the ABC transporter superfamily. Zinc importer (TC 3.A.1.15.5) family. The complex is composed of two ATP-binding proteins (ZnuC), two transmembrane proteins (ZnuB) and a solute-binding protein (ZnuA).

The protein resides in the cell inner membrane. It carries out the reaction Zn(2+)(out) + ATP(in) + H2O(in) = Zn(2+)(in) + ADP(in) + phosphate(in) + H(+)(in). Its function is as follows. Part of the ABC transporter complex ZnuABC involved in zinc import. Responsible for energy coupling to the transport system. The protein is Zinc import ATP-binding protein ZnuC of Ruegeria sp. (strain TM1040) (Silicibacter sp.).